We begin with the raw amino-acid sequence, 263 residues long: Regulatory protein RecX (263 aa).

It belongs to the RecX family.

The protein localises to the cytoplasm. Functionally, modulates RecA activity. This is Regulatory protein RecX from Bacillus pumilus (strain SAFR-032).